Here is a 347-residue protein sequence, read N- to C-terminus: UDP-3-O-acylglucosamine N-acyltransferase (347 aa).

The active-site Proton acceptor is the H241.

Belongs to the transferase hexapeptide repeat family. LpxD subfamily. In terms of assembly, homotrimer.

It carries out the reaction a UDP-3-O-[(3R)-3-hydroxyacyl]-alpha-D-glucosamine + a (3R)-hydroxyacyl-[ACP] = a UDP-2-N,3-O-bis[(3R)-3-hydroxyacyl]-alpha-D-glucosamine + holo-[ACP] + H(+). Its pathway is bacterial outer membrane biogenesis; LPS lipid A biosynthesis. Catalyzes the N-acylation of UDP-3-O-acylglucosamine using 3-hydroxyacyl-ACP as the acyl donor. Is involved in the biosynthesis of lipid A, a phosphorylated glycolipid that anchors the lipopolysaccharide to the outer membrane of the cell. The polypeptide is UDP-3-O-acylglucosamine N-acyltransferase (Neisseria gonorrhoeae (strain NCCP11945)).